We begin with the raw amino-acid sequence, 250 residues long: Putative ankyrin repeat protein RBE_0623 (250 aa).

ANK repeat units follow at residues 70 to 99 (IGDS…EPNT), 104 to 134 (NCYT…NINE), and 137 to 166 (GKET…PDKF).

This chain is Putative ankyrin repeat protein RBE_0623, found in Rickettsia bellii (strain RML369-C).